Reading from the N-terminus, the 565-residue chain is Estrogen receptor gamma (565 aa).

The interval 1 to 168 is modulating; it reads MAVASSPEKD…TSGGKTDLHY (168 aa). NR C4-type zinc fingers lie at residues 169–189 and 205–229; these read CAVC…CEGC and CPAT…LRKC. The segment at residues 169 to 234 is a DNA-binding region (nuclear receptor); the sequence is CAVCHDYASG…RLRKCYEVGM (66 aa). Residues 235 to 285 are hinge; the sequence is TKCGMRKERGNYRSPQMRRMTRLTSQGRTDSSSVLTGSAVVSLNAPQPSAL. The NR LBD domain occupies 286-516; that stretch reads TSEQLIERLM…DLLLEMLDAH (231 aa). Residues 522–565 are disordered; that stretch reads RLPRRSPEQEPEDQADAPAPPHSSGSGPSYTWTPSSSEGAGEPQ.

The protein belongs to the nuclear hormone receptor family. NR3 subfamily. In terms of assembly, homodimer. Abundant in the ovary and testes, barely detectable in the brain and muscle and undetectable in the liver.

Its subcellular location is the nucleus. In terms of biological role, the steroid hormones and their receptors are involved in the regulation of eukaryotic gene expression and affect cellular proliferation and differentiation in target tissues. This chain is Estrogen receptor gamma (esr3), found in Micropogonias undulatus (Atlantic croaker).